The sequence spans 356 residues: Alanine racemase, catabolic (356 aa).

Lys35 functions as the Proton acceptor; specific for D-alanine in the catalytic mechanism. At Lys35 the chain carries N6-(pyridoxal phosphate)lysine. Position 130 (Arg130) interacts with substrate. Tyr253 serves as the catalytic Proton acceptor; specific for L-alanine. Met301 provides a ligand contact to substrate.

This sequence belongs to the alanine racemase family. Pyridoxal 5'-phosphate is required as a cofactor.

It carries out the reaction L-alanine = D-alanine. Isomerizes L-alanine to D-alanine which is then oxidized to pyruvate by DadA. The chain is Alanine racemase, catabolic (dadX) from Salmonella typhi.